We begin with the raw amino-acid sequence, 423 residues long: Sulfate adenylyltransferase (423 aa).

The protein belongs to the sulfate adenylyltransferase family.

The catalysed reaction is sulfate + ATP + H(+) = adenosine 5'-phosphosulfate + diphosphate. Its pathway is sulfur metabolism; hydrogen sulfide biosynthesis; sulfite from sulfate: step 1/3. In Desulfovibrio desulfuricans (strain ATCC 27774 / DSM 6949 / MB), this protein is Sulfate adenylyltransferase.